The following is a 337-amino-acid chain: MAASQVPGEINIQAGETAKSGDRDLLGNDCRDQDRLPQRSWRQKCASYVLALRPWSFSASLTPVALGSALAYRSQGVLDPRLLVGCAVAVLAVHGAGNLVNTYYDFSKGIDHKKSDDRTLVDRILEPQDVVLFGVFLYTLGCVCAACLYCLSPLKLEHLALIYFGGLSGSFLYTGGIGFKYVALGDLVILITFGPLAVMFAYAVQVGSLAVFPLVYAIPLALSTEAVLHSNNTRDMESDREAGIVTLAILIGPTLSYVLYNTLLFLPYLIFSILATHCSISLALPLLTVPMAFSLERQFRSQTFNKLPQRTAKLNLLLGLFYVFGIILAPAGSLPKL.

N-acetylalanine is present on alanine 2. Transmembrane regions (helical) follow at residues 82–102 (LLVG…LVNT), 133–153 (FGVF…CLSP), 159–179 (LALI…GIGF), 187–207 (LVIL…VQVG), 208–228 (SLAV…EAVL), 244–266 (IVTL…LLFL), 276–296 (THCS…FSLE), and 314–334 (LNLL…AGSL).

The protein belongs to the UbiA prenyltransferase family. As to quaternary structure, interacts with HMGCR and SOAT1.

It localises to the endoplasmic reticulum membrane. The protein resides in the golgi apparatus membrane. It is found in the mitochondrion membrane. It catalyses the reaction menadiol + (2E,6E,10E)-geranylgeranyl diphosphate = menaquinol-4 + diphosphate. The enzyme catalyses all-trans-decaprenyl diphosphate + 4-hydroxybenzoate = 4-hydroxy-3-(all-trans-decaprenyl)benzoate + diphosphate. It functions in the pathway quinol/quinone metabolism; menaquinone biosynthesis. The protein operates within cofactor biosynthesis; ubiquinone biosynthesis. Its function is as follows. Prenyltransferase that mediates the formation of menaquinone-4 (MK-4) and coenzyme Q10. MK-4 is a vitamin K2 isoform required for endothelial cell development. Mediates the conversion of phylloquinone (PK) into MK-4, probably by cleaving the side chain of phylloquinone (PK) to release 2-methyl-1,4-naphthoquinone (menadione; K3) and then prenylating it with geranylgeranyl pyrophosphate (GGPP) to form MK-4. Also plays a role in cardiovascular development independently of MK-4 biosynthesis, by acting as a coenzyme Q10 biosynthetic enzyme: coenzyme Q10, also named ubiquinone, plays an important antioxidant role in the cardiovascular system. Mediates biosynthesis of coenzyme Q10 in the Golgi membrane, leading to protect cardiovascular tissues from NOS3/eNOS-dependent oxidative stress. This Ailuropoda melanoleuca (Giant panda) protein is UbiA prenyltransferase domain-containing protein 1 (UBIAD1).